The primary structure comprises 623 residues: Interleukin-27 receptor subunit alpha (623 aa).

The signal sequence occupies residues 1 to 24 (MNRLRVARLTPLELLLSLMSLLLG). The Extracellular portion of the chain corresponds to 25–510 (TRPHGSPGPL…HLPDNRIRWK (486 aa)). 2 consecutive Fibronectin type-III domains span residues 30–124 (SPGP…MKPD) and 125–225 (TPQI…TPFL). N-linked (GlcNAc...) asparagine glycosylation is present at N46. The short motif at 211-215 (WGEWS) is the WSXWS motif element. 5 N-linked (GlcNAc...) asparagine glycosylation sites follow: N296, N305, N360, N368, and N461. Fibronectin type-III domains are found at residues 316–412 (APCD…VPLA) and 413–505 (GPAV…LPDN). Residues 511–531 (ALPWFLSLWGLLLMGCGLSLA) traverse the membrane as a helical segment. The Cytoplasmic portion of the chain corresponds to 532–623 (STRCLQARCL…PTPEELGLLV (92 aa)). The short motif at 552–560 (IWERVPDPA) is the Box 1 motif element.

Belongs to the type I cytokine receptor family. Type 2 subfamily. As to expression, expressed in CD4+ and CD8+ T-cells, B-cells, natural killer cells and macrophages. Highest levels in CD4+ T-cells and natural killer cells. Expression highest in Th0 cells.

The protein localises to the membrane. Its function is as follows. Receptor for IL27. Requires IL6ST/GP130 to mediate signal transduction in response to IL27. This signaling system acts through STAT3 and STAT1. Involved in the regulation of Th1-type immune responses. Also appears to be involved in innate defense mechanisms. This is Interleukin-27 receptor subunit alpha (Il27ra) from Mus musculus (Mouse).